The following is a 255-amino-acid chain: Superoxide dismutase [Fe] 2, chloroplastic (255 aa).

The transit peptide at Met-1–Arg-32 directs the protein to the chloroplast. Fe cation-binding residues include His-67, His-119, Asp-203, and His-207.

Belongs to the iron/manganese superoxide dismutase family. As to quaternary structure, homodimer. It depends on Fe cation as a cofactor. In terms of tissue distribution, strongly expressed in the stems of the young seedlings, etiolated seedlings and embryogenic calli, but only minimally expressed in the leaves and the roots.

It localises to the plastid. The protein localises to the chloroplast. It carries out the reaction 2 superoxide + 2 H(+) = H2O2 + O2. Functionally, destroys superoxide anion radicals which are normally produced within the cells and which are toxic to biological systems. The sequence is that of Superoxide dismutase [Fe] 2, chloroplastic from Oryza sativa subsp. japonica (Rice).